A 360-amino-acid polypeptide reads, in one-letter code: UDP-D-xylose:L-fucose alpha-1,3-D-xylosyltransferase MGP4 (360 aa).

Residues 1 to 25 (MAQQKFLHQRPIQNPFTNPFSSSPL) are disordered. Over 1–41 (MAQQKFLHQRPIQNPFTNPFSSSPLSTSSISNRPISLLSRN) the chain is Cytoplasmic. Residues 14–25 (NPFTNPFSSSPL) are compositionally biased toward low complexity. The helical; Signal-anchor for type II membrane protein transmembrane segment at 42 to 62 (GLLLLLALLVILGVFLPWAGS) threads the bilayer. Over 63–360 (PLFPSPNKLS…ASESPLGKLE (298 aa)) the chain is Lumenal. Residues Asn93 and Asn168 are each glycosylated (N-linked (GlcNAc...) asparagine). Positions 191–193 (DVD) match the DXD motif motif. Asn285 and Asn310 each carry an N-linked (GlcNAc...) asparagine glycan.

The protein belongs to the glycosyltransferase 77 family. Requires Mn(2+) as cofactor. It depends on Mg(2+) as a cofactor. Widely expressed.

Its subcellular location is the golgi apparatus membrane. Functionally, catalyzes the transfer of D-xylose from UDP-alpha-D-xylose onto L-fucose. Probably involved in the biosynthesis of rhamnogalacturonan II (RG-II) through xylosylation of the internal fucose moiety of the A-chain of RG-II, a structurally complex pectic polysaccharide of the primary cell wall. RG-II is essential for the cell wall integrity of rapidly growing tissues such as roots and pollen tube growth and elongation. The protein is UDP-D-xylose:L-fucose alpha-1,3-D-xylosyltransferase MGP4 of Arabidopsis thaliana (Mouse-ear cress).